The sequence spans 614 residues: MFDKSRLNTLPESPGVYLMKGSDGTILYVGKAKSLRKRVRSYFGAAGESRYHIRFLVARVAEVEVIVTDTEKEALILENTLIKKHRPRYNLDLRDDKTYFSLRMDMNEEFPRLTIIRKVRQDGARYFGPYSSAASAREALKQLYRLFPLRHYPLETCRRRRRPCLFYQLRQCSAPCHGLISPEEYQGLVQGAALFLDGKNRDLLKTYRERMASAAANERYEEAARYRDLIRAIEVTVEKQKMVTTGGDADVLGIHREGSSLSLALLFIRGGRLIGSRSYLLAWELEDEEAVSSFLNDYYSREVFIPDEVLVPLPVADSAALAELLSERRGKRTSVAHPQRGTKAGLVKLAGKNAEAALREKQKREEGAEAVLTELKERLHLRNLPRCIECYDISNIQGTYPVGSRVSFRDGKADKGGYRHYRIKTVAGADDFAMMHEVLSRRFRDSPAKDEHPDLIVVDGGIGQLNILTAVLRELQVEDVDAASLAKSRVERDMAAEELTRSTERVFLPGRKNPVILRQNSAPLLLLARIRDEAHRFAITYHQKLRGKDTIRSILDTIPGIGPKRRKELLRQFGSLRRIREASRDELAATPTIPPTLAESIWKSLHENDEGDTP.

One can recognise a GIY-YIG domain in the interval 12–91 (ESPGVYLMKG…IKKHRPRYNL (80 aa)). The region spanning 201–236 (RDLLKTYRERMASAAANERYEEAARYRDLIRAIEVT) is the UVR domain.

The protein belongs to the UvrC family. As to quaternary structure, interacts with UvrB in an incision complex.

The protein localises to the cytoplasm. In terms of biological role, the UvrABC repair system catalyzes the recognition and processing of DNA lesions. UvrC both incises the 5' and 3' sides of the lesion. The N-terminal half is responsible for the 3' incision and the C-terminal half is responsible for the 5' incision. This chain is UvrABC system protein C, found in Geobacter metallireducens (strain ATCC 53774 / DSM 7210 / GS-15).